Here is an 831-residue protein sequence, read N- to C-terminus: Histone acetyltransferase SAS3 (831 aa).

In terms of domain architecture, MYST-type HAT spans 267 to 573; that stretch reads VWFSQIEYIV…VKYDKLLWEP (307 aa). The segment at 300–325 adopts a C2HC MYST-type zinc-finger fold; that stretch reads VFICEFCLKYMTSRYTFYRHQLKCLT. N6-acetyllysine; by autocatalysis is present on K367. Acetyl-CoA is bound by residues 419–421 and 426–432; these read ILT and QRKGYGQ. E452 (proton donor/acceptor) is an active-site residue. Residue S456 coordinates acetyl-CoA. Disordered regions lie at residues 614 to 639 and 719 to 813; these read ENYN…KTSK and PLGN…SHIR. The span at 621–633 shows a compositional bias: basic residues; sequence AHNKRRRRRRRSS. Composition is skewed to acidic residues over residues 736–746 and 755–794; these read EQDEVENDVDT and KEDE…DDDE. The span at 795–812 shows a compositional bias: basic and acidic residues; sequence DGKRKGQEQDENDIESHI.

Belongs to the MYST (SAS/MOZ) family. As to quaternary structure, component of the NuA3 histone acetyltransferase (HAT) complex. The NuA3 HAT complex has 2 functionally distinct forms that participate in transcription. The NuA3a HAT complex is composed of at least NTO1, SAS3, TAF14, YNG1 and EAF6. The NuA3b HAT complex contains an additional subunit, PDP3. SAS3 interacts with CDC68/SPT16. In terms of processing, autoacetylation at Lys-367 is required for proper function.

It is found in the nucleus. The catalysed reaction is L-lysyl-[protein] + acetyl-CoA = N(6)-acetyl-L-lysyl-[protein] + CoA + H(+). Functionally, catalytic component of the NuA3 histone acetyltransferase complex, that acetylates H3K14. The NuA3 HAT complex has 2 functionally distinct forms. NuA3a binds H3K4me3, through the PHD finger of YNG1, and acetylates H3K14 at the promoter region of actively transcribed genes to promote transcription initiation. NuA3b binds H3K36me3 at the coding regions of actively transcribed genes, through the PWWP domain of PDP3, and coordinates transcription elongation. In vitro, SAS3 acetylates free histones H3 and H4. It is involved in silencing the HMR locus. In Saccharomyces cerevisiae (strain ATCC 204508 / S288c) (Baker's yeast), this protein is Histone acetyltransferase SAS3.